A 710-amino-acid chain; its full sequence is MLSFQYPDVYRDETSVQEYHGHKICDPYSWLEDPDSEQTKAFVEAQNKITVPFLEQCPIRGLYKERMTELYDYPKYSCHFKKGKRYFYFYNTGLQNQRVLYVQDSLEGEARVFLDPNTLSDDGTVALRGYAFSEDGEYFAYGLSASGSDWVTIKFMKVDGAKELPDVLERVKFTCMAWTHDGKGMFYNSYPQQDGKSDGTETSTNLHQKLCYHVLGTDQSEDILCAEFPDEPKWMGGAELSDDGRYVLLSIWEGCDPVNRLWYCDLQQEPNGITGILKWVKLIDNFEGEYDYVTNEGTVFTFKTNRNSPNYRLINIDFTDPDESKWKVLVPEHEKDVLEWVACVRSNFLVLCYLHDVKNILQLHDLTTGALLKTFPLDVGSVVGYSGRKKDSEIFYQFTSFLSPGVIYHCDLTKEELEPMVFREVTVKGIDAADYQTIQIFYPSKDGTKIPMFIVHKKGIKLDGSHPAFLYGYGGFNISITPNYSVSRLIFVRHMGGVLAVANIRGGGEYGETWHKGGILANKQNCFDDFQCAAEYLIKEGYTSPKRLTINGGSNGGLLVAACANQRPDLFGCVIAQVGVMDMLKFHKFTIGHAWTTDYGCSDTKQHFEWLLKYSPLHNVKLPEADDIQYPSMLLLTADHDDRVVPLHSLKFIATLQYIVGRSRKQSNPLLIHVDTKAGHGAGKPTAKVIEEVSDMFAFIARCLNIEWIQ.

Residue Met-1 is modified to N-acetylmethionine. Lys-157 carries the N6-acetyllysine modification. Residues Ser-554, Asp-641, and His-680 each act as charge relay system in the active site.

It belongs to the peptidase S9A family.

The protein localises to the cytoplasm. The enzyme catalyses Hydrolysis of Pro-|-Xaa &gt;&gt; Ala-|-Xaa in oligopeptides.. Cleaves peptide bonds on the C-terminal side of prolyl residues within peptides that are up to approximately 30 amino acids long. This Mus musculus (Mouse) protein is Prolyl endopeptidase (Prep).